Here is a 239-residue protein sequence, read N- to C-terminus: Norbelladine 4'-O-methyltransferase 2 (239 aa).

S-adenosyl-L-methionine is bound by residues valine 55, glutamate 77, 79–80, serine 85, aspartate 103, and alanine 132; that span reads GV. Aspartate 155 is an a divalent metal cation binding site. Aspartate 157 lines the S-adenosyl-L-methionine pocket. The a divalent metal cation site is built by aspartate 181 and asparagine 182.

This sequence belongs to the class I-like SAM-binding methyltransferase superfamily. Cation-dependent O-methyltransferase family. Mg(2+) serves as cofactor.

It catalyses the reaction norbelladine + S-adenosyl-L-methionine = 4'-O-methylnorbelladine + S-adenosyl-L-homocysteine + H(+). It participates in alkaloid biosynthesis. In terms of biological role, 4'-O-methyltransferase converting norbelladine to 4'-O-methylnorbelladine. 4'-O-methylnorbelladine is a precursor to all Amaryllidaceae alkaloids such as galanthamine, lycorine and haemanthamine, and including haemanthamine- and crinamine-type alkaloids, promising anticancer agents. In Narcissus aff. pseudonarcissus MK-2014 (Daffodil), this protein is Norbelladine 4'-O-methyltransferase 2.